Reading from the N-terminus, the 313-residue chain is Ribonuclease HIII (313 aa).

Residues 63–85 are disordered; sequence ARWGTAEPQEKKKTAKKPADPRY. Residues 70 to 82 show a composition bias toward basic and acidic residues; it reads PQEKKKTAKKPAD. An RNase H type-2 domain is found at 94-310; the sequence is MSVIGSDEVG…TQKAQRLADK (217 aa). Aspartate 100, glutamate 101, and aspartate 205 together coordinate a divalent metal cation.

It belongs to the RNase HII family. RnhC subfamily. In terms of assembly, interacts with the RNA polymerase core. The cofactor is Mn(2+). It depends on Mg(2+) as a cofactor.

The protein localises to the cytoplasm. The enzyme catalyses Endonucleolytic cleavage to 5'-phosphomonoester.. In terms of biological role, endonuclease that specifically degrades the RNA of RNA-DNA hybrids. The polypeptide is Ribonuclease HIII (rnhC) (Bacillus subtilis (strain 168)).